A 249-amino-acid chain; its full sequence is Exosome complex component Rrp41 (249 aa).

The protein belongs to the RNase PH family. Rrp41 subfamily. As to quaternary structure, component of the archaeal exosome complex. Forms a hexameric ring-like arrangement composed of 3 Rrp41-Rrp42 heterodimers. The hexameric ring associates with a trimer of Rrp4 and/or Csl4 subunits.

The protein localises to the cytoplasm. Its function is as follows. Catalytic component of the exosome, which is a complex involved in RNA degradation. Has 3'-&gt;5' exoribonuclease activity. Can also synthesize heteromeric RNA-tails. The chain is Exosome complex component Rrp41 from Pyrococcus horikoshii (strain ATCC 700860 / DSM 12428 / JCM 9974 / NBRC 100139 / OT-3).